Here is a 379-residue protein sequence, read N- to C-terminus: Homoserine O-succinyltransferase (379 aa).

The AB hydrolase-1 domain occupies 51–360 (NAVLICHALS…DAPQGHDAFL (310 aa)). Catalysis depends on Ser157, which acts as the Nucleophile. Arg227 is a binding site for substrate. Catalysis depends on residues Asp323 and His356. Asp357 is a substrate binding site.

Belongs to the AB hydrolase superfamily. MetX family. As to quaternary structure, homodimer.

Its subcellular location is the cytoplasm. It carries out the reaction L-homoserine + succinyl-CoA = O-succinyl-L-homoserine + CoA. It participates in amino-acid biosynthesis; L-methionine biosynthesis via de novo pathway; O-succinyl-L-homoserine from L-homoserine: step 1/1. Functionally, transfers a succinyl group from succinyl-CoA to L-homoserine, forming succinyl-L-homoserine. In Pseudomonas syringae pv. tomato (strain ATCC BAA-871 / DC3000), this protein is Homoserine O-succinyltransferase.